Reading from the N-terminus, the 257-residue chain is Putative carboxymethylenebutenolidase (257 aa).

Active-site residues include Cys148, Asp195, and His226.

This sequence belongs to the dienelactone hydrolase family.

It catalyses the reaction 2-(5-oxo-2,5-dihydrofuran-2-ylidene)acetate + H2O = 4-oxohex-2-enedioate + H(+). This is Putative carboxymethylenebutenolidase from Saccharolobus solfataricus (strain ATCC 35092 / DSM 1617 / JCM 11322 / P2) (Sulfolobus solfataricus).